The sequence spans 508 residues: Photosystem II CP47 reaction center protein (508 aa).

6 helical membrane passes run 21-36 (SVHIMHTALVAGWAGS), 101-115 (IVFSGLCFLAAIWHW), 140-156 (GIHLFLSGVACFGFGAF), 203-218 (IAAGTLGILAGLFHLS), 237-252 (VLSSSIAAVFFAAFVV), and 457-472 (SFALLFFFGHIWHGAR).

The protein belongs to the PsbB/PsbC family. PsbB subfamily. PSII is composed of 1 copy each of membrane proteins PsbA, PsbB, PsbC, PsbD, PsbE, PsbF, PsbH, PsbI, PsbJ, PsbK, PsbL, PsbM, PsbT, PsbX, PsbY, PsbZ, Psb30/Ycf12, at least 3 peripheral proteins of the oxygen-evolving complex and a large number of cofactors. It forms dimeric complexes. Binds multiple chlorophylls. PSII binds additional chlorophylls, carotenoids and specific lipids. is required as a cofactor.

It localises to the plastid. The protein localises to the chloroplast thylakoid membrane. Its function is as follows. One of the components of the core complex of photosystem II (PSII). It binds chlorophyll and helps catalyze the primary light-induced photochemical processes of PSII. PSII is a light-driven water:plastoquinone oxidoreductase, using light energy to abstract electrons from H(2)O, generating O(2) and a proton gradient subsequently used for ATP formation. In Aethionema grandiflorum (Persian stone-cress), this protein is Photosystem II CP47 reaction center protein.